The sequence spans 144 residues: Sentan (144 aa).

Residues 1–31 (MCGCRASVPSTKHYSVNPAPTTRSPPAAAGM) form a disordered region. Positions 18-29 (PAPTTRSPPAAA) are enriched in low complexity.

The protein belongs to the S-100 family.

The protein localises to the cell projection. The protein resides in the cilium. In terms of biological role, may be a component of the linker structure that bridges the ciliary membrane and peripheral singlet microtubules. The chain is Sentan from Gallus gallus (Chicken).